The following is a 628-amino-acid chain: Monoterpene synthase like 2, chloroplastic (628 aa).

Residues Asp379, Asp383, and Asp531 each coordinate Mg(2+). The short motif at Asp379–Asp383 is the DDXXD motif element.

The protein belongs to the terpene synthase family. Tpsd subfamily. Mg(2+) serves as cofactor. Requires Mn(2+) as cofactor.

The protein resides in the plastid. Its subcellular location is the chloroplast. It participates in terpene metabolism; oleoresin biosynthesis. The protein operates within secondary metabolite biosynthesis; terpenoid biosynthesis. Functionally, monoterpene synthase (TPS) involved in the biosynthesis of monoterpene natural products included in conifer oleoresin secretions and volatile emissions; these compounds contribute to biotic and abiotic stress defense against herbivores and pathogens. This chain is Monoterpene synthase like 2, chloroplastic, found in Pinus banksiana (Jack pine).